The following is a 63-amino-acid chain: Large ribosomal subunit protein bL35 (63 aa).

Belongs to the bacterial ribosomal protein bL35 family.

This is Large ribosomal subunit protein bL35 from Campylobacter hominis (strain ATCC BAA-381 / DSM 21671 / CCUG 45161 / LMG 19568 / NCTC 13146 / CH001A).